Here is a 308-residue protein sequence, read N- to C-terminus: Ribosomal RNA large subunit methyltransferase F (308 aa).

This sequence belongs to the methyltransferase superfamily. METTL16/RlmF family.

The protein localises to the cytoplasm. It carries out the reaction adenosine(1618) in 23S rRNA + S-adenosyl-L-methionine = N(6)-methyladenosine(1618) in 23S rRNA + S-adenosyl-L-homocysteine + H(+). Functionally, specifically methylates the adenine in position 1618 of 23S rRNA. The sequence is that of Ribosomal RNA large subunit methyltransferase F from Escherichia coli (strain SMS-3-5 / SECEC).